The primary structure comprises 434 residues: Pyrichalasin H cluster regulator BC2 (434 aa).

2 disordered regions span residues 297 to 321 (GSSPSGTPESELTSPHKRATTCSPL) and 362 to 383 (HPGHEDHQQQQEEVKQHDRLSH). The span at 298-309 (SSPSGTPESELT) shows a compositional bias: polar residues. Over residues 362–380 (HPGHEDHQQQQEEVKQHDR) the composition is skewed to basic and acidic residues.

The protein resides in the nucleus. Functionally, transcription factor probably involved in regulation of gene cluster that mediates the biosynthesis of a tyrosine-derived cytochalasan acting as a fungal signal recognized by resistant rice plants and leads to avirulence in Pi33 resistant rice cultivars. The chain is Pyrichalasin H cluster regulator BC2 from Pyricularia oryzae (strain 70-15 / ATCC MYA-4617 / FGSC 8958) (Rice blast fungus).